Consider the following 85-residue polypeptide: ATP synthase epsilon chain (85 aa).

Belongs to the ATPase epsilon chain family. In terms of assembly, F-type ATPases have 2 components, CF(1) - the catalytic core - and CF(0) - the membrane proton channel. CF(1) has five subunits: alpha(3), beta(3), gamma(1), delta(1), epsilon(1). CF(0) has three main subunits: a, b and c.

The protein localises to the cell membrane. Functionally, produces ATP from ADP in the presence of a proton gradient across the membrane. The sequence is that of ATP synthase epsilon chain from Frankia casuarinae (strain DSM 45818 / CECT 9043 / HFP020203 / CcI3).